Here is a 423-residue protein sequence, read N- to C-terminus: F-box/LRR-repeat protein 2 (423 aa).

An F-box domain is found at 9–55 (GLINKKLPKELLLRIFSFLDIVTLCRCAQISKAWNILALDGSNWQRI). LRR repeat units follow at residues 61–87 (QTDV…SLRG), 88–113 (CIGV…NLNG), 114–139 (CTKI…DLTS), 140–165 (CVSI…NLSW), 166–191 (CDQI…LLRG), 192–217 (CTQL…NLQS), 218–243 (CSRV…CLSG), 244–269 (CGSL…EAAR), 270–295 (CSHL…DLEE), 296–321 (CILI…SLSH), 322–350 (CELI…ELDN), 351–375 (CLLI…ELYD), and 376–401 (CQQV…AYFA). Residues 80-90 (LRKLSLRGCIG) are interaction with Calmodulin. Lysine 201 participates in a covalent cross-link: Glycyl lysine isopeptide (Lys-Gly) (interchain with G-Cter in ubiquitin). Phosphothreonine is present on threonine 404. A lipid anchor (S-geranylgeranyl cysteine) is attached at cysteine 420. Positions 420-423 (CVIL) match the CAAX motif motif.

As to quaternary structure, part of the SCF (SKP1-CUL1-F-box) E3 ubiquitin-protein ligase complex SCF(FBXL2) composed of CUL1, SKP1, RBX1 and FBXL2. Interacts with calmodulin; may antagonize substrate ubiquitination by SCF(FBXL2). May interact with PIK3R1. Interacts with PTPN13. Phosphorylated by GSK-beta (GSK3B), promoting recognition by FBXO3, leading to its ubiquitination by the SCF(FBXO3) complex. In terms of processing, ubiquitinated at Lys-201 by the SCF(FBXO3) complex in response to lipopolysaccharide (LPS), leading to its degradation by the proteasome.

Its subcellular location is the membrane. It participates in protein modification; protein ubiquitination. Functionally, calcium-activated substrate recognition component of the SCF (SKP1-cullin-F-box protein) E3 ubiquitin-protein ligase complex, SCF(FBXL2), which mediates the ubiquitination and subsequent proteasomal degradation of target proteins. Unlike many F-box proteins, FBXL2 does not seem to target phosphodegron within its substrates but rather calmodulin-binding motifs and is thereby antagonized by calmodulin. This is the case for the cyclins CCND2 and CCND3 which polyubiquitination and subsequent degradation are inhibited by calmodulin. Through CCND2 and CCND3 degradation induces cell-cycle arrest in G(0). SCF(FBXL2) also mediates PIK3R2 ubiquitination and proteasomal degradation thereby regulating phosphatidylinositol 3-kinase signaling and autophagy. PCYT1A monoubiquitination by SCF(FBXL2) and subsequent degradation regulates synthesis of phosphatidylcholine, which is utilized for formation of membranes and of pulmonary surfactant. The SCF(FBXL2) complex acts as a regulator of inflammation by mediating ubiquitination and degradation of TRAF proteins (TRAF1, TRAF2, TRAF3, TRAF4, TRAF5 and TRAF6). The SCF(FBXL2) complex acts as a negative regulator of the NLRP3 inflammasome by mediating ubiquitination and degradation of NLRP3. This chain is F-box/LRR-repeat protein 2, found in Bos taurus (Bovine).